A 519-amino-acid polypeptide reads, in one-letter code: MSFYAAANPNAIPAPHIEYRALLPMLIVFGVACAGVLVEAFVPRAQRALTQTVLALGGLVAALIAVVSNTGLPRKLVAQSAIAADGPTLFIQGTILALSIGALLLIADRSIGADSDFVAQAADLPGSEQERASVQAGLRQTEVFPLAMFAVGGMMLFPAANDLITAFVALEVLSLPLYLLAGMARRRRLLSQEAAVKYFLLGAFSSAFFVYGLALVYGYAKSVEYGDIATALTASDRGDSLIIVGLALIGISLLFKLSGVPFHWWTPDVYQGAPTPITAFMAAGTKVAAFGALLRVFFVAFGGLAWDWRPVIWGVAIATMVVGAILGITQTDVKRLLAYSSIAHAGFVLTAFAATTRASESSVLFYLVAYGFMTIGAFAIVILVRDGDGEANHLSRWVGLGRRSPLVAGIFALFLLAMAGLPPTSGLWAKVAVFTAAYQGGAGPLVIVGVLASAVTAYYYLRIIVLMFAQEPAVEGPTVAVPGALASAAIALGVIVTVVLGIVPQPVLDLADKAVPFLR.

The next 14 helical transmembrane spans lie at 22-42 (LLPM…EAFV), 53-73 (VLAL…TGLP), 87-107 (PTLF…LLIA), 141-161 (TEVF…PAAN), 163-183 (LITA…LAGM), 198-218 (YFLL…LVYG), 242-262 (IIVG…GVPF), 287-307 (VAAF…LAWD), 310-330 (PVIW…GITQ), 336-356 (LLAY…AATT), 363-383 (VLFY…IVIL), 406-426 (LVAG…PTSG), 442-461 (AGPL…YYYL), and 483-503 (GALA…LGIV).

The protein belongs to the complex I subunit 2 family. As to quaternary structure, NDH-1 is composed of 14 different subunits. Subunits NuoA, H, J, K, L, M, N constitute the membrane sector of the complex.

The protein localises to the cell membrane. The enzyme catalyses a quinone + NADH + 5 H(+)(in) = a quinol + NAD(+) + 4 H(+)(out). Its function is as follows. NDH-1 shuttles electrons from NADH, via FMN and iron-sulfur (Fe-S) centers, to quinones in the respiratory chain. The immediate electron acceptor for the enzyme in this species is believed to be a menaquinone. Couples the redox reaction to proton translocation (for every two electrons transferred, four hydrogen ions are translocated across the cytoplasmic membrane), and thus conserves the redox energy in a proton gradient. The polypeptide is NADH-quinone oxidoreductase subunit N (Acidothermus cellulolyticus (strain ATCC 43068 / DSM 8971 / 11B)).